Here is a 190-residue protein sequence, read N- to C-terminus: GTP cyclohydrolase 1 (190 aa).

C79, H82, and C151 together coordinate Zn(2+).

It belongs to the GTP cyclohydrolase I family. As to quaternary structure, toroid-shaped homodecamer, composed of two pentamers of five dimers.

It catalyses the reaction GTP + H2O = 7,8-dihydroneopterin 3'-triphosphate + formate + H(+). Its pathway is cofactor biosynthesis; 7,8-dihydroneopterin triphosphate biosynthesis; 7,8-dihydroneopterin triphosphate from GTP: step 1/1. This chain is GTP cyclohydrolase 1, found in Clostridioides difficile (strain 630) (Peptoclostridium difficile).